The sequence spans 333 residues: tRNA-modifying protein YgfZ (333 aa).

The folate site is built by tryptophan 33 and tryptophan 195.

The protein belongs to the tRNA-modifying YgfZ family.

It localises to the cytoplasm. Folate-binding protein involved in regulating the level of ATP-DnaA and in the modification of some tRNAs. It is probably a key factor in regulatory networks that act via tRNA modification, such as initiation of chromosomal replication. The chain is tRNA-modifying protein YgfZ from Pectobacterium atrosepticum (strain SCRI 1043 / ATCC BAA-672) (Erwinia carotovora subsp. atroseptica).